A 250-amino-acid polypeptide reads, in one-letter code: Alpha/beta hydrolase nvfD (250 aa).

Active-site charge relay system residues include aspartate 198 and histidine 226.

The protein belongs to the AB hydrolase superfamily.

Its pathway is secondary metabolite biosynthesis; terpenoid biosynthesis. In terms of biological role, alpha/beta hydrolase; part of the gene cluster that mediates the biosynthesis of novofumigatonin, a heavily oxygenated meroterpenoid containing a unique orthoester moiety. The first step of the pathway is the synthesis of 3,5-dimethylorsellinic acid (DMOA) by the polyketide synthase nvfA via condensation of one acetyl-CoA starter unit with 3 malonyl-CoA units and 2 methylations. DMOA is then converted to farnesyl-DMOA by the farnesyltransferase nvfB. Epoxydation by FAD-dependent monooxygenase nvfK, followed by a protonation-initiated cyclization catalyzed by the terpene cyclase nvfL leads to the production of asnavolin H. The short chain dehydrogenase nvfC then as a 3-OH dehydrogenase of asnovolin H to yield chemesin D. There are two branches to synthesize asnovolin A from chemesin D. In one branch, chemesin D undergoes Baeyer-Villiger oxidation by nvfH, methylation by nvfJ, and enoyl reduction by the nvfM D enoylreductase that reduces the double bond between C-5'and C-6', to form respectively asnovolin I, asnovolin K, and asnovolin A. In the other branch, the methylation precedes the Baeyer-Villiger oxidation and the enoyl reduction to yield asnovolin A via the asnovolin J intermediate. Asnovolin A is further converted to fumigatonoid A by the Fe(II)/2-oxoglutarate-dependent dioxygenase nvfI that catalyzes an endoperoxidation reaction. The alpha/beta hydrolase nvfD then acts as an epimerase that converts fumigatonoid A to its C-5' epimer, which then undergoes spontaneous or nvfD-catalyzed lactonization. The following step utilizes the ketoreductase nvfG to produce fumigatonoid B. The dioxygenase nvfE further converts fumigatonoid B into fumigatonoid C. Finally the Fe(II)/2-oxoglutarate-dependent dioxygenase nvfF catalyzes two rounds of oxidation to transform fumigatonoid C into the end product, novofumigatonin A. This Aspergillus novofumigatus (strain IBT 16806) protein is Alpha/beta hydrolase nvfD.